The chain runs to 30 residues: Photosystem I reaction center subunit XII (30 aa).

Residues 6 to 26 (VFTILAIALVPAVMAALLGSA) traverse the membrane as a helical segment.

This sequence belongs to the PsaM family.

Its subcellular location is the cellular thylakoid membrane. The polypeptide is Photosystem I reaction center subunit XII (Synechococcus sp. (strain JA-3-3Ab) (Cyanobacteria bacterium Yellowstone A-Prime)).